A 147-amino-acid chain; its full sequence is MLDELDKKIIGILMKDSRISYREIAKELNVAVGTIYNRIKKLEESGVIQGFTLKLNYENIGYDLTAIMGIKAQGKKIREIERIIAKDKRVMCVYDVTGEYDIIVIAKFKNREDMNRFVKGVLSIDGVEKTNTHVVLEVVKEDFRLEP.

One can recognise an HTH asnC-type domain in the interval 2–63 (LDELDKKIIG…KLNYENIGYD (62 aa)). The segment at residues 21 to 40 (YREIAKELNVAVGTIYNRIK) is a DNA-binding region (H-T-H motif).

This is an uncharacterized protein from Pyrococcus abyssi (strain GE5 / Orsay).